A 299-amino-acid polypeptide reads, in one-letter code: Lysine exporter LysO (299 aa).

Helical transmembrane passes span M1–R21, Q31–L51, L58–A78, L109–L129, H131–L151, I169–L189, S207–F227, and P277–F297.

It belongs to the LysO family.

The protein localises to the cell inner membrane. Its function is as follows. Mediates export of lysine. The polypeptide is Lysine exporter LysO (Escherichia coli (strain K12)).